Here is a 131-residue protein sequence, read N- to C-terminus: MVNDIIADSLTRIRNAAMRRLDYTTLYYAKIVVSILEVFLAKGFIESYKVIDKDGKQSINVVLKYDEKGRSVISEIKRISKSGRRVYKGRDELKRFKNGYGTIVVSTSKGVIGNEEAYKANVGGEALCSIW.

It belongs to the universal ribosomal protein uS8 family. As to quaternary structure, part of the 30S ribosomal subunit. Contacts proteins S5 and S12.

Functionally, one of the primary rRNA binding proteins, it binds directly to 16S rRNA central domain where it helps coordinate assembly of the platform of the 30S subunit. The chain is Small ribosomal subunit protein uS8 from Wolinella succinogenes (strain ATCC 29543 / DSM 1740 / CCUG 13145 / JCM 31913 / LMG 7466 / NCTC 11488 / FDC 602W) (Vibrio succinogenes).